The sequence spans 439 residues: Paraneoplastic antigen-like protein 8A (439 aa).

Positions 213-439 are disordered; that stretch reads ETPNNWNATE…RRATNESRKV (227 aa). Positions 231–249 are enriched in basic residues; that stretch reads LVRRAGAKSRSRRKKQKKN. The span at 403-419 shows a compositional bias: polar residues; sequence KAPQGQQPAEATASTSR. Basic and acidic residues predominate over residues 423-439; sequence AKPEGSPRRATNESRKV.

It belongs to the PNMA family.

This is Paraneoplastic antigen-like protein 8A (PNMA8A) from Pongo abelii (Sumatran orangutan).